We begin with the raw amino-acid sequence, 335 residues long: 7,8-didemethyl-8-hydroxy-5-deazariboflavin synthase (335 aa).

One can recognise a Radical SAM core domain in the interval 1 to 246; that stretch reads MTYSKNVFIP…QVAPNLIDPK (246 aa). Positions 15, 19, and 22 each coordinate [4Fe-4S] cluster.

This sequence belongs to the radical SAM superfamily. CofG family. In terms of assembly, consists of two subunits, CofG and CofH. The cofactor is [4Fe-4S] cluster.

The catalysed reaction is 5-amino-5-(4-hydroxybenzyl)-6-(D-ribitylimino)-5,6-dihydrouracil + S-adenosyl-L-methionine = 7,8-didemethyl-8-hydroxy-5-deazariboflavin + 5'-deoxyadenosine + L-methionine + NH4(+) + H(+). Its pathway is cofactor biosynthesis; coenzyme F0 biosynthesis. Functionally, catalyzes the radical-mediated synthesis of 7,8-didemethyl-8-hydroxy-5-deazariboflavin from 5-amino-5-(4-hydroxybenzyl)-6-(D-ribitylimino)-5,6-dihydrouracil. This Methanosarcina mazei (strain ATCC BAA-159 / DSM 3647 / Goe1 / Go1 / JCM 11833 / OCM 88) (Methanosarcina frisia) protein is 7,8-didemethyl-8-hydroxy-5-deazariboflavin synthase.